Reading from the N-terminus, the 248-residue chain is Probable transcriptional regulatory protein ECH_0704 (248 aa).

Residues 1-21 are disordered; the sequence is MAGHSQFANIKHRKGAQDAKR.

It belongs to the TACO1 family.

Its subcellular location is the cytoplasm. This chain is Probable transcriptional regulatory protein ECH_0704, found in Ehrlichia chaffeensis (strain ATCC CRL-10679 / Arkansas).